The following is a 145-amino-acid chain: MIIDITEIMDWIPHRYPFLLVDRVLKIDPNKSITGIKNVTVNEPQFTGHFPARPVMPGVLMVEAMAQLAAILVAKSLGSTKNKEVFLMTIENAKFRRIVQPGDTMHIHAVIDQQRANVWKFSSTVTVEGEIATESKFTAMIKDKT.

H49 is a catalytic residue.

Belongs to the thioester dehydratase family. FabZ subfamily.

It is found in the cytoplasm. The enzyme catalyses a (3R)-hydroxyacyl-[ACP] = a (2E)-enoyl-[ACP] + H2O. Involved in unsaturated fatty acids biosynthesis. Catalyzes the dehydration of short chain beta-hydroxyacyl-ACPs and long chain saturated and unsaturated beta-hydroxyacyl-ACPs. The chain is 3-hydroxyacyl-[acyl-carrier-protein] dehydratase FabZ from Rickettsia conorii (strain ATCC VR-613 / Malish 7).